The following is a 304-amino-acid chain: Quinolinate synthase (304 aa).

Iminosuccinate contacts are provided by His24 and Ser41. Cys86 is a [4Fe-4S] cluster binding site. Residues 112 to 114 (YVN) and Ser129 each bind iminosuccinate. Cys171 is a binding site for [4Fe-4S] cluster. Residues 197–199 (HPE) and Thr214 each bind iminosuccinate. Cys259 lines the [4Fe-4S] cluster pocket.

This sequence belongs to the quinolinate synthase family. Type 2 subfamily. [4Fe-4S] cluster is required as a cofactor.

It localises to the cytoplasm. It carries out the reaction iminosuccinate + dihydroxyacetone phosphate = quinolinate + phosphate + 2 H2O + H(+). The protein operates within cofactor biosynthesis; NAD(+) biosynthesis; quinolinate from iminoaspartate: step 1/1. In terms of biological role, catalyzes the condensation of iminoaspartate with dihydroxyacetone phosphate to form quinolinate. The chain is Quinolinate synthase from Geotalea uraniireducens (strain Rf4) (Geobacter uraniireducens).